The chain runs to 476 residues: mRNA cap guanine-N(7) methyltransferase (476 aa).

Basic and acidic residues predominate over residues M1–S14. Residues M1–K128 are disordered. Polar residues predominate over residues A20–C50. A phosphoserine mark is found at S24, S28, and S29. Basic and acidic residues-rich tracts occupy residues D54–K68, L84–K93, and R107–Y117. Residue S118 is modified to Phosphoserine. The short motif at K126 to K128 is the Nuclear localization signal element. The 309-residue stretch at S167–Q475 folds into the mRNA cap 0 methyltransferase domain. N176–N177 contacts mRNA. S-adenosyl-L-methionine-binding residues include K180, G205, D227, D261, Q284, and Y289.

Belongs to the class I-like SAM-binding methyltransferase superfamily. mRNA cap 0 methyltransferase family. In terms of assembly, interacts with importin alpha, leading to stimulate both RNA-binding and methyltransferase activity. Interaction with importin alpha and beta is required for its nuclear localization, importin beta dissociating in response to RanGTP, allowing RNMT-importin alpha to bind RNA substrates. Interacts with elongating form of polymerase II and RNGTT. Interacts with RAMAC, this interaction significantly enhances RNA-binding and cap methyltransferase activity.

It localises to the nucleus. The catalysed reaction is a 5'-end (5'-triphosphoguanosine)-ribonucleoside in mRNA + S-adenosyl-L-methionine = a 5'-end (N(7)-methyl 5'-triphosphoguanosine)-ribonucleoside in mRNA + S-adenosyl-L-homocysteine. Its activity is regulated as follows. Methyltransferase activity is activated by RAMAC. In terms of biological role, catalytic subunit of the mRNA-capping methyltransferase RNMT:RAMAC complex that methylates the N7 position of the added guanosine to the 5'-cap structure of mRNAs. Binds RNA containing 5'-terminal GpppC. This chain is mRNA cap guanine-N(7) methyltransferase (RNMT), found in Macaca fascicularis (Crab-eating macaque).